Here is a 420-residue protein sequence, read N- to C-terminus: MKHKSEFLNFIQERGYLYQCTNIDRLDQLLSQDNYIIAYIGFDCTAPSLHIGSLIQIMMLRHLQKFGYKPIVLLGGGTTKIGDPSGKDKARSVLPIEDINQNILGIKKTLEKMISFDYGKTGAIIVNNADWLDNIKYIDFLRDIGTHFSVNRMLGFDSVKIRLDREQNLSFLEFNYMLLQAYDFVELNKKYGCRFQIGGSDQWGNIVNGIELSKKLNLPELFGLTTPLLLNAQGKKMGKTESGAVWLDGSMLNSYDYWQYFRNVDDQDVGRFLRLFTDLPIDEIKKLESLKDQETNEAKKVLATEVTKICHGCKEAELARSAAISAFENEDSSLLSGYTITKEQIANGIPLIDLLYDTGFEPSKGAAKRLIQGNGCKVNDNTINDVNYTINSESFKGQPFIKLSAGKKRHIKILVSEVRK.

Tyr39 lines the L-tyrosine pocket. The 'HIGH' region motif lies at Cys44–Ser53. Tyr176 and Gln180 together coordinate L-tyrosine. Residues Lys236–Thr240 carry the 'KMSKS' region motif. Lys239 serves as a coordination point for ATP. In terms of domain architecture, S4 RNA-binding spans Ile349–Leu414.

It belongs to the class-I aminoacyl-tRNA synthetase family. TyrS type 1 subfamily. As to quaternary structure, homodimer.

The protein resides in the cytoplasm. It catalyses the reaction tRNA(Tyr) + L-tyrosine + ATP = L-tyrosyl-tRNA(Tyr) + AMP + diphosphate + H(+). Its function is as follows. Catalyzes the attachment of tyrosine to tRNA(Tyr) in a two-step reaction: tyrosine is first activated by ATP to form Tyr-AMP and then transferred to the acceptor end of tRNA(Tyr). The protein is Tyrosine--tRNA ligase of Wolbachia pipientis subsp. Culex pipiens (strain wPip).